The sequence spans 271 residues: Phosphatidate cytidylyltransferase (271 aa).

8 helical membrane-spanning segments follow: residues 12-32, 53-73, 75-95, 111-131, 136-156, 174-194, 199-219, and 251-271; these read LLPIALGGFFLLEGAFFALFI, FGRVAYAATVAVLMVALYHLP, LAGAVLLLALVWWTLATVLVL, LGMGLLILLPAWQGLVLLKQW, GLIIAVMVLVWGADIGAYFSG, WEGVYGGLAASLAITLAVGLY, LGALLLALLGAALVVFVSIVG, and SLTAAIPVFAALLWAAGWGAP.

This sequence belongs to the CDS family.

The protein localises to the cell inner membrane. It catalyses the reaction a 1,2-diacyl-sn-glycero-3-phosphate + CTP + H(+) = a CDP-1,2-diacyl-sn-glycerol + diphosphate. Its pathway is phospholipid metabolism; CDP-diacylglycerol biosynthesis; CDP-diacylglycerol from sn-glycerol 3-phosphate: step 3/3. The sequence is that of Phosphatidate cytidylyltransferase (cdsA) from Pseudomonas aeruginosa (strain ATCC 15692 / DSM 22644 / CIP 104116 / JCM 14847 / LMG 12228 / 1C / PRS 101 / PAO1).